A 202-amino-acid polypeptide reads, in one-letter code: 3-isopropylmalate dehydratase small subunit (202 aa).

This sequence belongs to the LeuD family. LeuD type 1 subfamily. As to quaternary structure, heterodimer of LeuC and LeuD.

The enzyme catalyses (2R,3S)-3-isopropylmalate = (2S)-2-isopropylmalate. The protein operates within amino-acid biosynthesis; L-leucine biosynthesis; L-leucine from 3-methyl-2-oxobutanoate: step 2/4. Its function is as follows. Catalyzes the isomerization between 2-isopropylmalate and 3-isopropylmalate, via the formation of 2-isopropylmaleate. The polypeptide is 3-isopropylmalate dehydratase small subunit (Rhizobium etli (strain ATCC 51251 / DSM 11541 / JCM 21823 / NBRC 15573 / CFN 42)).